Reading from the N-terminus, the 299-residue chain is Protein charybde (299 aa).

A disordered region spans residues 73–103; that stretch reads LNTRPSATPPSAGGGGPLAGGGSVGMTTPKQ. The segment covering 84 to 96 has biased composition (gly residues); it reads AGGGGPLAGGGSV.

It belongs to the DDIT4 family.

The protein localises to the cytoplasm. Functionally, inhibits cell growth by regulating the Tor pathway upstream of the Tsc1-Tsc2 complex and downstream of Akt1. Acts as a cell death activator during head development. The polypeptide is Protein charybde (chrb) (Drosophila melanogaster (Fruit fly)).